The sequence spans 637 residues: Early transcription factor 70 kDa subunit (637 aa).

The Helicase ATP-binding domain occupies 32 to 185 (RTIIDENRSV…GHIIDLMSEE (154 aa)). 45–52 (HIMGSGKT) provides a ligand contact to ATP. Residues 135 to 138 (DEAH) carry the DEXH box motif. The Helicase C-terminal domain maps to 327–507 (KFKYFINRIQ…VLPFDIKKLL (181 aa)).

The protein belongs to the helicase family. VETF subfamily. As to quaternary structure, heterodimer of a 70 kDa and a 82 kDa subunit. Part of the early transcription complex composed of ETF, RAP94/OPG109, and the DNA-directed RNA polymerase.

The protein localises to the virion. Acts with RNA polymerase to initiate transcription from early gene promoters. Is recruited by the RPO-associated protein of 94 kDa RAP94/OPG109 to form the early transcription complex, which also contains the core RNA polymerase. ETF heterodimer binds to early gene promoters. In Homo sapiens (Human), this protein is Early transcription factor 70 kDa subunit (OPG118).